Reading from the N-terminus, the 931-residue chain is Probable UDP-N-acetylglucosamine--peptide N-acetylglucosaminyltransferase SPINDLY (931 aa).

The span at 1–15 (MAWTEKDVENGKESE) shows a compositional bias: basic and acidic residues. The tract at residues 1–38 (MAWTEKDVENGKESESLGNNGFLKGGQSSSGSKGSPGR) is disordered. Residues 25–37 (GGQSSSGSKGSPG) are compositionally biased toward low complexity. TPR repeat units lie at residues 48–81 (DKDA…DSKS), 82–115 (IESL…DPQN), 116–149 (ACAL…DPSY), 157–190 (AIVL…DSHY), 191–224 (APAY…RPMY), 225–258 (AEAY…SPNF), 266–299 (AIAL…NWHY), 300–333 (ADAM…NPHC), 334–367 (AEAC…KPNF), 369–401 (QSLN…NPTY), and 402–435 (AEAY…DPDS). The tract at residues 436-931 (RNAGQNRLLA…NHNGNHGNLS (496 aa)) is catalytic region. Residues 864 to 884 (QQQQTQTESVVPEESSVNPSE) show a composition bias toward low complexity. The tract at residues 864-931 (QQQQTQTESV…NHNGNHGNLS (68 aa)) is disordered. The span at 910–931 (KSSTSEENGVQSNHNGNHGNLS) shows a compositional bias: polar residues.

This sequence belongs to the glycosyltransferase 41 family. O-GlcNAc transferase subfamily.

It is found in the nucleus. It carries out the reaction L-seryl-[protein] + UDP-N-acetyl-alpha-D-glucosamine = 3-O-(N-acetyl-beta-D-glucosaminyl)-L-seryl-[protein] + UDP + H(+). The catalysed reaction is L-threonyl-[protein] + UDP-N-acetyl-alpha-D-glucosamine = 3-O-(N-acetyl-beta-D-glucosaminyl)-L-threonyl-[protein] + UDP + H(+). It functions in the pathway protein modification; protein glycosylation. Probable O-linked N-acetylglucosamine transferase (OGT) involved in various processes such as gibberellin (GA) signaling pathway. OGTs catalyze the addition of nucleotide-activated sugars directly onto the polypeptide through O-glycosidic linkage with the hydroxyl of serine or threonine. Probably acts by adding O-linked sugars to yet unknown proteins. The sequence is that of Probable UDP-N-acetylglucosamine--peptide N-acetylglucosaminyltransferase SPINDLY (SPY) from Solanum lycopersicum (Tomato).